Here is a 526-residue protein sequence, read N- to C-terminus: Probable Xaa-Pro aminopeptidase GLRG_02280 (526 aa).

Mn(2+) contacts are provided by aspartate 285, aspartate 296, glutamate 454, and glutamate 495.

It belongs to the peptidase M24B family. It depends on Mn(2+) as a cofactor.

It catalyses the reaction Release of any N-terminal amino acid, including proline, that is linked to proline, even from a dipeptide or tripeptide.. In terms of biological role, catalyzes the removal of a penultimate prolyl residue from the N-termini of peptides. The polypeptide is Probable Xaa-Pro aminopeptidase GLRG_02280 (Colletotrichum graminicola (strain M1.001 / M2 / FGSC 10212) (Maize anthracnose fungus)).